Reading from the N-terminus, the 147-residue chain is Spermidine export protein MdtJ (147 aa).

The next 4 helical transmembrane spans lie at 1–21, 31–51, 54–74, and 81–101; these read MIYWIFLGLAIIAEIIGTLSM, TGHVVMYFMITGSYVMLSLAV, VALGVAYALWEGIGILIITIF, and ETLSPLKIAGLVTLIGGILLV. Over residues 105-117 the composition is skewed to basic residues; sequence TRKPKQPNRHRGN. The tract at residues 105-147 is disordered; sequence TRKPKQPNRHRGNRPPSVQGLKTQTTGHHKGVAVESGEHHAAA.

The protein belongs to the drug/metabolite transporter (DMT) superfamily. Small multidrug resistance (SMR) (TC 2.A.7.1) family. MdtJ subfamily. In terms of assembly, forms a complex with MdtI.

The protein resides in the cell inner membrane. Functionally, catalyzes the excretion of spermidine. In Yersinia pseudotuberculosis serotype IB (strain PB1/+), this protein is Spermidine export protein MdtJ.